Consider the following 123-residue polypeptide: Large ribosomal subunit protein bL12 (123 aa).

It belongs to the bacterial ribosomal protein bL12 family. In terms of assembly, homodimer. Part of the ribosomal stalk of the 50S ribosomal subunit. Forms a multimeric L10(L12)X complex, where L10 forms an elongated spine to which 2 to 4 L12 dimers bind in a sequential fashion. Binds GTP-bound translation factors.

Functionally, forms part of the ribosomal stalk which helps the ribosome interact with GTP-bound translation factors. Is thus essential for accurate translation. This chain is Large ribosomal subunit protein bL12, found in Rhodopseudomonas palustris (strain BisA53).